Here is a 931-residue protein sequence, read N- to C-terminus: Ribosome-releasing factor 2, mitochondrial (931 aa).

Positions 63-379 constitute a tr-type G domain; it reads EKTRNIGIIA…AVNNLLPGPS (317 aa). GTP-binding positions include 72–79, 162–166, and 216–219; these read AHIDAGKT, DTPGH, and NKLD.

This sequence belongs to the TRAFAC class translation factor GTPase superfamily. Classic translation factor GTPase family. EF-G/EF-2 subfamily.

It is found in the mitochondrion. In terms of biological role, mitochondrial GTPase that mediates the disassembly of ribosomes from messenger RNA at the termination of mitochondrial protein biosynthesis. Not involved in the GTP-dependent ribosomal translocation step during translation elongation. The chain is Ribosome-releasing factor 2, mitochondrial (mef2) from Talaromyces stipitatus (strain ATCC 10500 / CBS 375.48 / QM 6759 / NRRL 1006) (Penicillium stipitatum).